The chain runs to 212 residues: HTH-type transcriptional regulatory protein RaaS (212 aa).

One can recognise an HTH tetR-type domain in the interval 6 to 65; it reads LTAHARIREAAIEQFGRHGFGVGLRAIAEAAGVSAALVIHHFGSKEGLRKACDDFVAEEI. The segment at residues 28–47 is a DNA-binding region (H-T-H motif); the sequence is GLRAIAEAAGVSAALVIHHF.

Homodimer. Interacts with long chain acyl-CoA derivatives. Interacts with several drugs such rhodamine 6G, ethidium and safranin O.

Interaction with long chain acyl-CoA derivatives (oleoyl-CoA and, to lesser extent, stearoyl-CoA) prevents binding to DNA, leading to the expression of the target genes. Long chain acyl-CoA derivatives may serve as biological indicators of the bacterial metabolic state. In terms of biological role, regulates the expression of the Rv1217c-Rv1218c multidrug efflux system and its own expression. Acts by binding to promoter regions of Rv1219c and upstream of the Rv1218c gene. Important for survival in prolonged stationary phase and during macrophage infection. May be used to eliminate non-growing mycobacteria. The polypeptide is HTH-type transcriptional regulatory protein RaaS (Mycobacterium tuberculosis (strain ATCC 25618 / H37Rv)).